An 89-amino-acid chain; its full sequence is Small ribosomal subunit protein uS15 (89 aa).

This sequence belongs to the universal ribosomal protein uS15 family. Part of the 30S ribosomal subunit. Forms a bridge to the 50S subunit in the 70S ribosome, contacting the 23S rRNA.

One of the primary rRNA binding proteins, it binds directly to 16S rRNA where it helps nucleate assembly of the platform of the 30S subunit by binding and bridging several RNA helices of the 16S rRNA. In terms of biological role, forms an intersubunit bridge (bridge B4) with the 23S rRNA of the 50S subunit in the ribosome. The chain is Small ribosomal subunit protein uS15 from Frankia casuarinae (strain DSM 45818 / CECT 9043 / HFP020203 / CcI3).